A 1009-amino-acid polypeptide reads, in one-letter code: Type VII secretion system accessory factor EsaA (1009 aa).

The next 6 membrane-spanning stretches (helical) occupy residues 7-27 (IYAL…IFFV), 822-842 (ISPT…AYIF), 869-889 (AITS…VGLI), 903-923 (KFIL…TYLL), 928-948 (SIGM…MNNL), and 979-999 (IGLA…LNMF).

This sequence belongs to the EsaA family. As to quaternary structure, homodimer. Interacts with EssB.

It is found in the cell membrane. Its function is as follows. Component of the type VII secretion system (Ess). Provides together with EssB and other components such as EssC and EssE a secretion platform across the cytoplasmic membrane in the host. In Staphylococcus aureus (strain MRSA252), this protein is Type VII secretion system accessory factor EsaA.